The sequence spans 60 residues: Large ribosomal subunit protein bL32 (60 aa).

Residues 1-16 (MAVPKRKTSPSKRGMR) show a composition bias toward basic residues. Positions 1-60 (MAVPKRKTSPSKRGMRRSADALKAPTYVEDKNSGELRRPHHVDLKTGMYRGRQVLEPKEA) are disordered. The segment covering 28–44 (VEDKNSGELRRPHHVDL) has biased composition (basic and acidic residues).

Belongs to the bacterial ribosomal protein bL32 family.

This chain is Large ribosomal subunit protein bL32, found in Chelativorans sp. (strain BNC1).